The following is a 215-amino-acid chain: MNNEQPKIPQATAKRLPLYYRFLKNLHASGKQRVSSAELSEAVKVDPATIRRDFSYFGALGKKGYGYNVNYLLSFFRKTLDQDEITEVALFGVGNLGTAFLNYNFTKNNNTKIVMAFDVDQKKVGKEVGGVPVYHLDELENRLHEGIPVAILTVPAPAAQWITDRLVQKGIKGILNFTPARLNVPKHIRVHHIDLAVELQSLVYFLTVDEHFSLQ.

The segment at residues 18 to 57 (LYYRFLKNLHASGKQRVSSAELSEAVKVDPATIRRDFSYF) is a DNA-binding region (H-T-H motif). 92 to 97 (GVGNLG) lines the NAD(+) pocket.

Belongs to the transcriptional regulatory Rex family. Homodimer.

Its subcellular location is the cytoplasm. Its function is as follows. Modulates transcription in response to changes in cellular NADH/NAD(+) redox state. This Geobacillus sp. (strain WCH70) protein is Redox-sensing transcriptional repressor Rex.